Here is a 449-residue protein sequence, read N- to C-terminus: tRNA-2-methylthio-N(6)-dimethylallyladenosine synthase (449 aa).

Residues 13-128 (RRIFIETYGC…LPHLIGTVEK (116 aa)) form the MTTase N-terminal domain. 6 residues coordinate [4Fe-4S] cluster: cysteine 22, cysteine 58, cysteine 92, cysteine 166, cysteine 170, and cysteine 173. Residues 152 to 383 (SRIKISGFIS…ITLQLKISLM (232 aa)) enclose the Radical SAM core domain. The TRAM domain maps to 386-449 (KENIGKTMEI…AATLFGDPKL (64 aa)).

This sequence belongs to the methylthiotransferase family. MiaB subfamily. Monomer. Requires [4Fe-4S] cluster as cofactor.

Its subcellular location is the cytoplasm. The catalysed reaction is N(6)-dimethylallyladenosine(37) in tRNA + (sulfur carrier)-SH + AH2 + 2 S-adenosyl-L-methionine = 2-methylsulfanyl-N(6)-dimethylallyladenosine(37) in tRNA + (sulfur carrier)-H + 5'-deoxyadenosine + L-methionine + A + S-adenosyl-L-homocysteine + 2 H(+). In terms of biological role, catalyzes the methylthiolation of N6-(dimethylallyl)adenosine (i(6)A), leading to the formation of 2-methylthio-N6-(dimethylallyl)adenosine (ms(2)i(6)A) at position 37 in tRNAs that read codons beginning with uridine. The polypeptide is tRNA-2-methylthio-N(6)-dimethylallyladenosine synthase (Azobacteroides pseudotrichonymphae genomovar. CFP2).